Consider the following 535-residue polypeptide: GPI mannosyltransferase 4 (535 aa).

Over 1 to 10 (MSLSLDFNWR) the chain is Cytoplasmic. Residues 11–31 (YVYLIAIGLKFVLALSNSYIH) form a helical membrane-spanning segment. At 32 to 91 (PDEHFQSFEVLTNKIFSFTTTTPWEFSSDTPARSFGPLYLFYAPLLYSIKLVGYELSPLQ) the chain is on the lumenal side. A helical membrane pass occupies residues 92–112 (IWYMARLQNVLIGWVITDMCI). Residues 113 to 141 (YRLLPTKPERIKGLFYTSTSYITLVYQSH) lie on the Cytoplasmic side of the membrane. A helical transmembrane segment spans residues 142 to 162 (CFSNSIETWLVLICVLVINDL). Topologically, residues 163–181 (RFIQESNVPELQSQRQYQK) are lumenal. A helical transmembrane segment spans residues 182–202 (LFWFGALVSIGIFNRITFPAF). Residues 203–220 (LALPSLYLMKYFRHNKMS) lie on the Cytoplasmic side of the membrane. A helical transmembrane segment spans residues 221–241 (AIFSLLGFMLPTIAIILLDTF). At 242 to 284 (EFNGSIDDILKHPLDFNSYVITPLNNLIYNSKVENLSNHGLHP) the chain is on the lumenal side. 2 N-linked (GlcNAc...) asparagine glycosylation sites follow: N244 and N276. Residues 285–305 (YYTHLLVNLPQILGPGLFFMV) traverse the membrane as a helical segment. Over 306–311 (SNFKNQ) the chain is Cytoplasmic. Residues 312–332 (YWKTTPFLAVISGVSVLSLIP) traverse the membrane as a helical segment. Residues 333 to 337 (HQELR) lie on the Lumenal side of the membrane. Residues 338–358 (FLIPIVPLVCCCFDLKNISSA) traverse the membrane as a helical segment. The Cytoplasmic segment spans residues 359-370 (SKGERITKAPPM). A helical membrane pass occupies residues 371–391 (VSVLMNLWYLFNILLAVLMGV). Over 392–535 (YHQGGIVPAL…KPGLGIYELL (144 aa)) the chain is Lumenal. The N-linked (GlcNAc...) asparagine glycan is linked to N507.

Belongs to the glycosyltransferase 22 family. PIGZ subfamily.

It is found in the endoplasmic reticulum membrane. The protein operates within glycolipid biosynthesis; glycosylphosphatidylinositol-anchor biosynthesis. Functionally, alpha-1,2-mannosyltransferase involved in glycosylphosphatidylinositol-anchor biosynthesis. Transfers a fourth mannose to trimannosyl-GPIs during GPI precursor assembly. The presence of a fourth mannose in GPI is essential in fungi. This Debaryomyces hansenii (strain ATCC 36239 / CBS 767 / BCRC 21394 / JCM 1990 / NBRC 0083 / IGC 2968) (Yeast) protein is GPI mannosyltransferase 4 (SMP3).